The sequence spans 371 residues: MIEIEKITLYHLSMNLKKPFKNSIETLQERKFLIVEAIDTSGVTGWGEVSAFSSPWYTEETIGTCLHMLKDFFIPNVVGREFNHPSEVPDSLARYKGNRMAKAGLESAVWDIYAKKKGVSLAEALGGTRDKVPAGVVVGLAPLDDMLKEIESYQKEGYQRIKIKIQPGQDVELVKAIRSRFPTIPLMADANSSYELKDISRLKELDDYHLMMIEQPLQADDIVDHRHLQKHLKTAICLDESICSVDDARRAIELGSCKIINIKPSRVGGLTEALKIHDLCKEHHMQVWCGGMLETGISRAQNVALASLPQFTIPGDISSSSRYWDEDIVTPDIRIDNGFISVSKQPGLGVEVNQDIMRKYVTKMDVFTQHG.

K164 (proton donor) is an active-site residue. Positions 189, 214, and 239 each coordinate Mg(2+). K263 serves as the catalytic Proton acceptor.

The protein belongs to the mandelate racemase/muconate lactonizing enzyme family. MenC type 2 subfamily. Requires a divalent metal cation as cofactor.

It catalyses the reaction (1R,6R)-6-hydroxy-2-succinyl-cyclohexa-2,4-diene-1-carboxylate = 2-succinylbenzoate + H2O. Its pathway is quinol/quinone metabolism; 1,4-dihydroxy-2-naphthoate biosynthesis; 1,4-dihydroxy-2-naphthoate from chorismate: step 4/7. It participates in quinol/quinone metabolism; menaquinone biosynthesis. Functionally, converts 2-succinyl-6-hydroxy-2,4-cyclohexadiene-1-carboxylate (SHCHC) to 2-succinylbenzoate (OSB). Does not show detectable N-acylamino acid racemase (NAAAR) activity with N-acetyl-S-methionine as substrate. The sequence is that of o-succinylbenzoate synthase from Bacillus subtilis (strain 168).